The primary structure comprises 365 residues: MAAFQCPPERVLRPLARAISASQRRRQTYEKWPTGRKSYRAVMCNELGKPLVVEDKFSTENLGTSQVRVAVHSCGINFADILKCIGKYQEKPELPFVPGTEISGEVVEVGSKVTSLSKGDRVLGVCGQGGGMAEECVLPQTALWKIPSSLSFTQAAALAISYGTAYIGLKHKANLQPGQTVLVTAAAGALGLASVDLAANVFGAKVIGASRKEKLVIVQEIGATATIDYTRENIKDKVKELTDGHGANVIMEAVGGDVFKQCLKCIAWNGYIIPVGFASGEIPQIPANILLVKNCSAVGLYWGAHSKHDPQLLRESVDKTLEYFKNGKLKGPYISASFGLDKVNEAFQMILQRKSTGKVVINTKQ.

This sequence belongs to the zinc-containing alcohol dehydrogenase family. Quinone oxidoreductase subfamily.

This is Quinone oxidoreductase-like protein 2 homolog from Nematostella vectensis (Starlet sea anemone).